The chain runs to 342 residues: S-adenosylmethionine:tRNA ribosyltransferase-isomerase (342 aa).

The protein belongs to the QueA family. As to quaternary structure, monomer.

The protein localises to the cytoplasm. The enzyme catalyses 7-aminomethyl-7-carbaguanosine(34) in tRNA + S-adenosyl-L-methionine = epoxyqueuosine(34) in tRNA + adenine + L-methionine + 2 H(+). The protein operates within tRNA modification; tRNA-queuosine biosynthesis. In terms of biological role, transfers and isomerizes the ribose moiety from AdoMet to the 7-aminomethyl group of 7-deazaguanine (preQ1-tRNA) to give epoxyqueuosine (oQ-tRNA). This is S-adenosylmethionine:tRNA ribosyltransferase-isomerase from Streptococcus mutans serotype c (strain ATCC 700610 / UA159).